A 473-amino-acid polypeptide reads, in one-letter code: Cannabinoid receptor 1 (473 aa).

Residues 1–118 (MKSILDGLAD…CFMILNPSQQ (118 aa)) are Extracellular-facing. Residues 2–23 (KSILDGLADTTFRTITTDLLYV) are required for mitochondrial localization. Residues Asn79 and Asn85 are each glycosylated (N-linked (GlcNAc...) asparagine). Residues 119–144 (LAIAVLSLTLGTFTVLENLLVLCVIL) form a helical membrane-spanning segment. Topologically, residues 145–156 (HSRSLRCRPSYH) are cytoplasmic. The chain crosses the membrane as a helical span at residues 157 to 177 (FIGSLAVADLLGSVIFVYSFV). Topologically, residues 178-189 (DFHVFHRKDSPN) are extracellular. The chain crosses the membrane as a helical span at residues 190 to 214 (VFLFKLGGVTASFTASVGSLFLTAI). At 215–234 (DRYISIHRPLAYKRIVTRPK) the chain is on the cytoplasmic side. Residues 235 to 257 (AVVAFCVMWTIAIVIAVLPLLGW) form a helical membrane-spanning segment. At 258 to 275 (NCKKLNSVCSDIFPLIDE) the chain is on the extracellular side. The chain crosses the membrane as a helical span at residues 276 to 301 (TYLMFWIGVTSILLLFIVYAYMYILW). Residues 302-346 (KAHSHAVRMLQRGTQKSIIIQSTEDGKVQITRPDQTRMDIRLAKT) are Cytoplasmic-facing. The chain crosses the membrane as a helical span at residues 347 to 367 (LVLILVVLIICWGPLLAIMVY). The Extracellular segment spans residues 368–379 (DVFGKMNKLIKT). The helical transmembrane segment at 380–401 (IFAFCSMLCLLNSTVNPIIYAL) threads the bilayer. Residues 402–473 (RSKDLRHAFR…VSTDTTAEAL (72 aa)) are Cytoplasmic-facing. A lipid anchor (S-palmitoyl cysteine) is attached at Cys417.

It belongs to the G-protein coupled receptor 1 family. In terms of processing, palmitoylation at Cys-417 is important for recruitment at both plasma membrane and lipid rafts and association with G protein alpha subunits.

It localises to the cell membrane. The protein resides in the mitochondrion outer membrane. Its subcellular location is the cell projection. The protein localises to the axon. It is found in the presynapse. G-protein coupled receptor for cannabinoids. Mediates many cannabinoid-induced effects in the central nervous system (CNS), as well as in peripheral tissues. Regulates cellular respiration and energy production in response to cannabinoids. Signaling typically involves reduction in cyclic AMP. This chain is Cannabinoid receptor 1 (CNR1), found in Taeniopygia guttata (Zebra finch).